Consider the following 177-residue polypeptide: FMRFamide-related peptides (177 aa).

An N-terminal signal peptide occupies residues 1–21; sequence MNHPRSIAMLAALWLVVSVTS. Residues 22–32 constitute a propeptide that is removed on maturation; it reads TPVRRSPDLEA. A Phenylalanine amide modification is found at Phe-45. Positions 47–93 are excised as a propeptide; it reads RSTLPVVPPAQPSFLQRYSAPQPAALTADDLMTFLRAYEEDYSSPVS. A phenylalanine amide mark is found at Phe-102 and Phe-111. The propeptide occupies 113–131; it reads RSVDEENSGYQAETNTYPQ. Leu-143 bears the Leucine amide mark. Positions 145 to 177 are excised as a propeptide; it reads RDNELSESNDEDRYEVESERTKRSVVDPCNDCA. The tract at residues 145–177 is disordered; that stretch reads RDNELSESNDEDRYEVESERTKRSVVDPCNDCA. A compositionally biased stretch (acidic residues) spans 149–158; sequence LSESNDEDRY. The segment covering 159-169 has biased composition (basic and acidic residues); it reads EVESERTKRSV.

The protein belongs to the FARP (FMRFamide related peptide) family. Only expressed in the CNS and predominantly in the thoracic ganglia. Strongest expression is seen in two pairs of large neurons in each thoracic ganglion. These neurons are ventrolateral neurosecretory cells 1 and 2, they project their axons through transverse nerves into the periphery where axons from the prothoracic ganglion innervate the prothoracic gland.

Its subcellular location is the secreted. Functionally, regulates ecdysteroidogenesis by direct innervation of the prothoracic gland by reducing cAMP production via the receptor for myosuppressin. The neurons that innervate the prothoracic gland during the fifth instar are most active during days 0-4, after which they reduce and then peak again on day 6. Expression suppresses the biosynthesis of steroid hormones called ecdysteroids that elicit molting and metamorphosis. This chain is FMRFamide-related peptides, found in Bombyx mori (Silk moth).